Here is a 735-residue protein sequence, read N- to C-terminus: MKTKQQLRFLATILLTTILFVLAKTDTDPLEVLALQDLYKSLRNPEQLRGWRLEGGDPCGEAWLGISCSGSSIVDLQLRELKLLGSLGNQLQHLHNLKILDVSFNNLEGEIPFGLPPNATHINMAYNNLTQSIPFSLPLMTSLQSLNLSHNSLSGPLGNVFSGLQIKEMDLSFNNLTGDLPSSFGTLMNLTSLYLQNNRLTGSVIYLADLPLADLNIEDNQFSGIIPSHFQSIPHLWIWGNKFHVEPNYKPWKFPLDVRPLIQNDTGYPTTESSAIMNFPRPETQKVKKKKKGIGAGSTFLLVGGLALLGTFFALFAVRMNHRRAQNLAAIHRSNNSIAYSLPVSTGREYPVATEDNPQIKRFQPPPAPQLRHLPSPPVRIDKSARRKSFSATCQYPSFAKLFSAAELQLATNCFSEENLLGEGPLGSVYRAKLPDGQFAVVRNIPMSSLSLHEEEQFTEVLQTASKLRHPNIVTLLGFCIENGEHLLVYEYVGHLSLYNAMHDEVYKPLSWGLRLRIAIGVARALDYLHSSFCPPIAHSDLKATNILLDEELTPRIADCGLASLRPLTSNSVKLRASEIAIQNTGYIAPEHGQPGSSGTKSDTYALGVLLLELLTGRKAFDSSRPRGEQLLVKWASTRLHDRRSLEQMIDGGIAGTFSSRVASQYADIISLCTQAEKEFRPPVSEIVEALTALIQKQNKEASSSVADKTDPFSKSFCSTRTRFISSPTFSYLSS.

An N-terminal signal peptide occupies residues 1 to 23 (MKTKQQLRFLATILLTTILFVLA). The Extracellular portion of the chain corresponds to 24 to 297 (KTDTDPLEVL…KKKKKGIGAG (274 aa)). LRR repeat units follow at residues 78–94 (LREL…LQHL), 96–119 (NLKI…PPNA), 120–140 (THIN…LPLM), 142–163 (SLQS…VFSG), 165–187 (QIKE…FGTL), 189–211 (NLTS…ADLP), 212–232 (LADL…HFQS), and 233–253 (IPHL…KPWK). N-linked (GlcNAc...) asparagine glycosylation is found at Asn-118, Asn-128, Asn-147, Asn-175, and Asn-189. Residue Asn-264 is glycosylated (N-linked (GlcNAc...) asparagine). The chain crosses the membrane as a helical span at residues 298-318 (STFLLVGGLALLGTFFALFAV). Topologically, residues 319-735 (RMNHRRAQNL…SSPTFSYLSS (417 aa)) are cytoplasmic. Residues 358–378 (PQIKRFQPPPAPQLRHLPSPP) are disordered. The 281-residue stretch at 415–695 (FSEENLLGEG…EIVEALTALI (281 aa)) folds into the Protein kinase domain.

This sequence belongs to the protein kinase superfamily. Ser/Thr protein kinase family. As to expression, expressed in seedlings, roots, stems, leaves, flowers and siliques.

It localises to the membrane. The protein is Protein STRUBBELIG-RECEPTOR FAMILY 2 (SRF2) of Arabidopsis thaliana (Mouse-ear cress).